Reading from the N-terminus, the 409-residue chain is Lissencephaly-1 homolog (409 aa).

Positions 7 to 39 constitute a LisH domain; it reads QEEELRFAVADYLQSCGYTNALEAFKKDASIPK. The stretch at 56–81 forms a coiled coil; the sequence is SVVRLQKKVMDLELRLNNTTREMNSG. The segment covering 75–92 has biased composition (polar residues); the sequence is TREMNSGVPTRNSRSSND. Positions 75–105 are disordered; that stretch reads TREMNSGVPTRNSRSSNDWIPRPPEKHSLSG. WD repeat units lie at residues 105 to 146, 147 to 186, 189 to 228, 231 to 270, 273 to 332, 335 to 374, and 377 to 409; these read GHRS…RTLR, GHTD…CRMT, GHDH…CVYN, GHRE…CKEE, GHEH…CLFS, GHDN…CSKS, and AHNH…WECR.

The protein belongs to the WD repeat LIS1/nudF family.

It is found in the cytoplasm. The protein localises to the cytoskeleton. Its subcellular location is the microtubule organizing center. It localises to the centrosome. Positively regulates the activity of the minus-end directed microtubule motor protein dynein. May enhance dynein-mediated microtubule sliding by targeting dynein to the microtubule plus end. Required for several dynein- and microtubule-dependent processes. The protein is Lissencephaly-1 homolog of Trichoplax adhaerens (Trichoplax reptans).